The primary structure comprises 333 residues: Acyl-CoA wax alcohol acyltransferase 2 (333 aa).

The next 3 helical transmembrane spans lie at 15-35 (VFAV…VIAV), 38-58 (YLVV…WLAF), and 130-150 (IFPG…MPFL).

The protein belongs to the diacylglycerol acyltransferase family. In terms of assembly, monomer. As to expression, highly expressed in skin, where it is primarily restricted to undifferentiated peripheral sebocytes. Also expressed at lower level in other tissues except pancreas.

It localises to the endoplasmic reticulum membrane. The enzyme catalyses a long chain fatty alcohol + a fatty acyl-CoA = a wax ester + CoA. It carries out the reaction all-trans-retinol + an acyl-CoA = an all-trans-retinyl ester + CoA. It catalyses the reaction an acyl-CoA + a 1,2-diacyl-sn-glycerol = a triacyl-sn-glycerol + CoA. The catalysed reaction is 11-cis-retinol + a fatty acyl-CoA = 11-cis-retinyl ester + CoA. The enzyme catalyses 9-cis-retinol + a fatty acyl-CoA = 9-cis-retinyl ester + CoA. It carries out the reaction 13-cis-retinol + a fatty acyl-CoA = 13-cis-retinyl ester + CoA. It catalyses the reaction a 1-acylglycerol + an acyl-CoA = a 1,2-diacylglycerol + CoA. The catalysed reaction is 1-O-alkylglycerol + an acyl-CoA = 1-O-alkyl-3-acylglycerol + CoA. The enzyme catalyses a 2-acylglycerol + an acyl-CoA = a 1,2-diacyl-sn-glycerol + CoA. It carries out the reaction 2-(9Z-octadecenoyl)-glycerol + hexadecanoyl-CoA = 1-hexadecanoyl-2-(9Z-octadecenoyl)-sn-glycerol + CoA. It catalyses the reaction 1,2-di-(9Z-octadecenoyl)-sn-glycerol + hexadecanoyl-CoA = 1,2-di-(9Z)-octadecenoyl-3-hexadecanoyl-sn-glycerol + CoA. The catalysed reaction is hexadecan-1-ol + hexadecanoyl-CoA = hexadecanyl hexadecanoate + CoA. The enzyme catalyses hexadecane-1,2-diol + hexadecanoyl-CoA = 2-hydroxyhexadecyl hexadecanoate + CoA. It carries out the reaction 9-cis-retinol + hexadecanoyl-CoA = 9-cis-retinyl hexadecanoate + CoA. It catalyses the reaction all-trans-retinol + hexadecanoyl-CoA = all-trans-retinyl hexadecanoate + CoA. The catalysed reaction is 1,2-di-(9Z-octadecenoyl)-sn-glycerol + (9Z)-octadecenoyl-CoA = 1,2,3-tri-(9Z-octadecenoyl)-glycerol + CoA. The enzyme catalyses hexadecan-1-ol + (9Z)-octadecenoyl-CoA = hexadecanyl (9Z)-octadecenoate + CoA. It carries out the reaction (9Z)-hexadecen-1-ol + (9Z)-octadecenoyl-CoA = 1-O-(9Z)-hexadecenyl (9Z)-octadecenoate + CoA. It catalyses the reaction octadecan-1-ol + (9Z)-octadecenoyl-CoA = 1-O-octadecyl (9Z)-octadecenoate + CoA. The catalysed reaction is (9Z)-octadecen-1-ol + (9Z)-octadecenoyl-CoA = 1-O-(9Z)-octadecenyl (9Z)-octadecenoate + CoA. The enzyme catalyses hexadecan-1-ol + (9Z)-hexadecenoyl-CoA = 1-O-hexadecyl (9Z)-hexadecenoate + CoA. It carries out the reaction hexadecan-1-ol + octadecanoyl-CoA = hexadecanyl octadecanoate + CoA. It catalyses the reaction 11-cis-retinol + hexadecanoyl-CoA = 11-cis-retinyl hexadecanoate + CoA. The catalysed reaction is 1-O-(9Z-octadecenyl)-glycerol + (9Z)-octadecenoyl-CoA = 1-O-(9Z-octadecyl)-3-(9Z-octadecenoyl)-glycerol + CoA. The enzyme catalyses 1-(9Z-octadecenoyl)-glycerol + (9Z)-octadecenoyl-CoA = 1,2-di-(9Z-octadecenoyl)-glycerol + CoA. It carries out the reaction 11-cis-retinol + tetradecanoyl-CoA = 11-cis-retinyl tetradecanoate + CoA. It catalyses the reaction 9-cis-retinol + tetradecanoyl-CoA = 9-cis-retinyl tetradecanoate + CoA. The catalysed reaction is 13-cis-retinol + tetradecanoyl-CoA = 13-cis-retinyl tetradecanoate + CoA. The enzyme catalyses all-trans-retinol + tetradecanoyl-CoA = all-trans-retinyl tetradecanoate + CoA. It carries out the reaction tetradecan-1-ol + tetradecanoyl-CoA = tetradecanyl tetradecanoate + CoA. 11-cis retinoids act as allosteric modulators of acyl-CoA retinol O-fatty-acyltransferase (ARAT) activity by suppressing esterification of 9-cis, 13-cis, or all-trans retinols concurrently increasing the enzyme specificity toward 11-cis isomer. In terms of biological role, acyltransferase that catalyzes the formation of ester bonds between fatty alcohols and fatty acyl-CoAs to form wax monoesters. Shows a preference for medium chain acyl-CoAs from C12 to C16 in length and fatty alcohols shorter than C20, as the acyl donors and acceptors, respectively. Also possesses acyl-CoA retinol acyltransferase (ARAT) activity that preferentially esterifies 11-cis-retinol, a chromophore precursor of bleached opsin pigments in cone cells. Shows higher catalytic efficiency toward 11-cis-retinol versus 9-cis-retinol, 13-cis-retinol, and all-trans-retinol substrates. In Homo sapiens (Human), this protein is Acyl-CoA wax alcohol acyltransferase 2 (AWAT2).